We begin with the raw amino-acid sequence, 427 residues long: Gustatory receptor for sugar taste 43a (427 aa).

The Cytoplasmic segment spans residues 1 to 37; the sequence is MEISQPSIGIFYISKVLALAPYATVRNSKGRVEIGRS. A helical transmembrane segment spans residues 38–63; that stretch reads WLFTVYSATLTVVMVFLTYRGLLFDA. Residues 64–75 are Extracellular-facing; it reads NSEIPVRMKSAT. Beta-D-fructose-binding residues include R70 and D83. The chain crosses the membrane as a helical span at residues 76–96; that stretch reads SKVVTALDVSVVVMAIVSGVY. Over 97–135 the chain is Cytoplasmic; that stretch reads CGLFSLNDTLELNDRLNKIDNTLNAYNNFRRDRWRALGM. Residues 136–158 traverse the membrane as a helical segment; sequence AAVSLLAISILVGLDVGTWMRIA. The Extracellular segment spans residues 159–168; the sequence is QDMNIAQSDT. A helical transmembrane segment spans residues 169–193; that stretch reads ELNVHWYIPFYSLYFILTGLQVNIA. Residue Y182 coordinates beta-D-fructose. Residues 194-293 lie on the Cytoplasmic side of the membrane; sequence NTAYGLGRRF…CVHLLSNSFG (100 aa). Residues 294–316 form a helical membrane-spanning segment; sequence IAVLFILVSCLLHLVATAYFLFL. T310 is a binding site for beta-D-fructose. Over 317 to 324 the chain is Extracellular; it reads ELLSKRDN. A helical membrane pass occupies residues 325–346; the sequence is GYLWVQMLWICFHFLRLLMVVE. Residue H337 coordinates beta-D-fructose. Topologically, residues 347 to 402 are cytoplasmic; sequence PCHLAARESRKTIQIVCEIERKVHEPILAEAVKKFWQQLLVVDADFSACGLCRVNR. Residues 403–423 traverse the membrane as a helical segment; that stretch reads TILTSFASAIATYLVILIQFQ. Residue Q421 coordinates Ca(2+). Residues 424–427 are Extracellular-facing; that stretch reads RTNG.

Belongs to the insect chemoreceptor superfamily. Gustatory receptor (GR) family. Gr21a subfamily. Homotetramer. Expressed in the adult labellar chemosensory neurons and in the adult head, abdomen, leg and wing. In larvae, is expressed in taste organs, as well as the brain and the gastrointestinal system.

The protein resides in the cell membrane. Its function is as follows. Gustatory receptor which mediates acceptance or avoidance behavior, depending on its substrates. Gr43a is the main sugar receptor in larvae. Functions as a narrowly tuned fructose receptor in taste neurons but also as a fructose receptor in the brain. Necessary and sufficient to sense hemolymph fructose and promote feeding in hungry flies but suppress feeding in satiated flies. This Drosophila melanogaster (Fruit fly) protein is Gustatory receptor for sugar taste 43a (Gr43a).